A 316-amino-acid polypeptide reads, in one-letter code: Protein PXR1 (316 aa).

One can recognise a G-patch domain in the interval 25-71 (TSRFGHQYLERMGWKPGKGLGLVEHATTSHVKVSIKDDNLGLGSKLA). A disordered region spans residues 146–280 (GTTKKRKIDS…DSMLMPKEQL (135 aa)). A compositionally biased stretch (basic and acidic residues) spans 179–195 (DRKEKEEKKTEKENSEI). The segment covering 196–209 (KKKKKEKKEKKEKK) has biased composition (basic residues). Residues 210 to 240 (EKKDKNEKKEKKDKNEKKEKKDKNEEKEKKE) are compositionally biased toward basic and acidic residues. Over residues 241-260 (KKEKKEKKDKKDKKDKKDKK) the composition is skewed to basic residues. Positions 261–270 (EKKEVKEVTR) are enriched in basic and acidic residues.

The protein belongs to the PINX1 family.

The protein localises to the nucleus. It localises to the nucleolus. Functionally, involved in rRNA-processing at A0, A1 and A2 sites and negatively regulates telomerase. The polypeptide is Protein PXR1 (PXR1) (Debaryomyces hansenii (strain ATCC 36239 / CBS 767 / BCRC 21394 / JCM 1990 / NBRC 0083 / IGC 2968) (Yeast)).